The primary structure comprises 344 residues: Beta-hexosaminidase (344 aa).

Substrate-binding positions include D60, R68, R132, and K162–H163. H175 serves as the catalytic Proton donor/acceptor. Residue D247 is the Nucleophile of the active site.

It belongs to the glycosyl hydrolase 3 family. NagZ subfamily.

The protein localises to the cytoplasm. The enzyme catalyses Hydrolysis of terminal non-reducing N-acetyl-D-hexosamine residues in N-acetyl-beta-D-hexosaminides.. Its pathway is cell wall biogenesis; peptidoglycan recycling. Plays a role in peptidoglycan recycling by cleaving the terminal beta-1,4-linked N-acetylglucosamine (GlcNAc) from peptide-linked peptidoglycan fragments, giving rise to free GlcNAc, anhydro-N-acetylmuramic acid and anhydro-N-acetylmuramic acid-linked peptides. This is Beta-hexosaminidase from Haemophilus ducreyi (strain 35000HP / ATCC 700724).